The chain runs to 478 residues: Glutamate--tRNA ligase 1 (478 aa).

The 'HIGH' region motif lies at 10-20 (PSPTGFLHIGG). The short motif at 242-246 (KLSKR) is the 'KMSKS' region element. Lysine 245 is an ATP binding site.

This sequence belongs to the class-I aminoacyl-tRNA synthetase family. Glutamate--tRNA ligase type 1 subfamily. In terms of assembly, monomer.

It localises to the cytoplasm. The enzyme catalyses tRNA(Glu) + L-glutamate + ATP = L-glutamyl-tRNA(Glu) + AMP + diphosphate. Catalyzes the attachment of glutamate to tRNA(Glu) in a two-step reaction: glutamate is first activated by ATP to form Glu-AMP and then transferred to the acceptor end of tRNA(Glu). In Orientia tsutsugamushi (strain Boryong) (Rickettsia tsutsugamushi), this protein is Glutamate--tRNA ligase 1.